A 217-amino-acid chain; its full sequence is Probable GTP-binding protein EngB (217 aa).

An EngB-type G domain is found at 27 to 201; that stretch reads GGVEIAFAGR…AQTLSGWYLA (175 aa). Residues 35–42, 62–66, 80–83, 147–150, and 180–182 each bind GTP; these read GRSNAGKS, GRTQL, DLPG, TKAD, and FSS. Residues Ser-42 and Thr-64 each contribute to the Mg(2+) site.

It belongs to the TRAFAC class TrmE-Era-EngA-EngB-Septin-like GTPase superfamily. EngB GTPase family. It depends on Mg(2+) as a cofactor.

Functionally, necessary for normal cell division and for the maintenance of normal septation. In Aeromonas salmonicida (strain A449), this protein is Probable GTP-binding protein EngB.